The chain runs to 489 residues: Leukocyte immunoglobulin-like receptor subfamily A member 1 (489 aa).

The N-terminal stretch at 1–16 (MTPIVTVLICLRLSLG) is a signal peptide. The Extracellular segment spans residues 17 to 461 (PRTHVQAGTL…SHPQDYTVEN (445 aa)). Ig-like C2-type domains lie at 27–116 (PKPT…PLEL), 119–224 (TGAY…GVSK), 226–315 (PSLS…DPLD), and 326–415 (PFIS…SDSL). Cys49 and Cys98 form a disulfide bridge. N-linked (GlcNAc...) asparagine glycosylation occurs at Asn140. 3 disulfide bridges follow: Cys145-Cys197, Cys157-Cys167, and Cys246-Cys297. N-linked (GlcNAc...) asparagine glycans are attached at residues Asn281, Asn302, and Asn341. Cysteines 346 and 397 form a disulfide. The disordered stretch occupies residues 425–453 (TLSPPQNKSDSKAGAANTLSPSQNKTASH). 2 N-linked (GlcNAc...) asparagine glycosylation sites follow: Asn431 and Asn448. Positions 441–453 (NTLSPSQNKTASH) are enriched in polar residues. Residues 462–482 (LIRMGIAGLVLVVLGILLFEA) traverse the membrane as a helical segment. Over 483 to 489 (QHSQRSL) the chain is Cytoplasmic.

As to expression, detected in monocytes and B-cells.

The protein localises to the membrane. May act as receptor for class I MHC antigens. In Homo sapiens (Human), this protein is Leukocyte immunoglobulin-like receptor subfamily A member 1 (LILRA1).